We begin with the raw amino-acid sequence, 111 residues long: Carboxysome shell protein CcmK1 (111 aa).

A BMC domain is found at 4–90; sequence AVGMIETLGF…PHENLEYVLP (87 aa).

Belongs to the bacterial microcompartments protein family. CcmK subfamily. Homohexamer. Interacts with full-length CcmM. Forms mixed heterohexamers of all possible stoichiometries with CcmK2, which might form dodecamers. Only very weak interactions with CcmK3 and CcmK4 were seen. Interacts with CcmN and CcmO in the carboxysome.

It localises to the carboxysome. One of the shell proteins of the carboxysome, a polyhedral inclusion where RuBisCO (ribulose bisphosphate carboxylase, rbcL-rbcS) is sequestered. Assembles into hexamers which make sheets that form the facets of the polyhedral carboxysome. The hexamer central pore probably regulates metabolite flux. Functionally, probably the major shell protein of the carboxysome, a polyhedral inclusion where RuBisCO (ribulose bisphosphate carboxylase, rbcL-rbcS) is sequestered. The central pore probably regulates metabolite flux. Hexamers make sheets that form the facets of the carboxysome. The protein is Carboxysome shell protein CcmK1 of Synechocystis sp. (strain ATCC 27184 / PCC 6803 / Kazusa).